Reading from the N-terminus, the 321-residue chain is uncharacterized protein (321 aa).

Helical transmembrane passes span 12-32 (IGVEFIIFSVYAVFSISWAAT), 52-72 (LITSMIVVAKIFGASFTAFLV), 86-106 (ILMSSGIFLSFVDSYSGILII), 109-129 (LTGLGSACALVCLVPIAQQWF), 136-156 (FVISFNITSNLVGITLGLVLA), 168-188 (DSLSFYAWINLILLILWLFVG), 214-234 (WGMIIFYIGPILFLNSLFTFL), 254-274 (KEIPALANFAIIFGPYLGLFF), and 292-312 (IFICGFCMLFLQNLVLIQIFA).

It is found in the cell membrane. This is an uncharacterized protein from Campylobacter jejuni subsp. jejuni serotype O:2 (strain ATCC 700819 / NCTC 11168).